Consider the following 3124-residue polypeptide: Collagen alpha-1(XII) chain (3124 aa).

Positions M1 to A23 are cleaved as a signal peptide. The 91-residue stretch at P27–P117 folds into the Fibronectin type-III 1 domain. N32 carries N-linked (GlcNAc...) asparagine glycosylation. Residues D139–I311 enclose the VWFA 1 domain. O-linked (Xyl...) (chondroitin sulfate) serine glycosylation is present at S328. A Fibronectin type-III 2 domain is found at P335–V424. The VWFA 2 domain maps to D439–V615. 6 consecutive Fibronectin type-III domains span residues P633 to K722, A724 to N815, P816 to R906, S908 to S998, A999 to F1087, and P1089 to D1179. O-linked (Xyl...) (chondroitin sulfate) serine glycans are attached at residues S797, S890, and S981. N-linked (GlcNAc...) asparagine glycans are attached at residues N1006, N1032, and N1044. The segment at K1075–M1100 is disordered. A VWFA 3 domain is found at D1199–V1371. 10 consecutive Fibronectin type-III domains span residues P1387–S1476, S1477–P1568, G1569–P1659, V1660–P1756, G1759–N1853, M1854–G1939, T1940–S2030, G2031–L2121, P2122–N2210, and V2211–T2299. The N-linked (GlcNAc...) asparagine glycan is linked to N1512. N1767 carries N-linked (GlcNAc...) asparagine glycosylation. N-linked (GlcNAc...) asparagine glycans are attached at residues N2210 and N2273. Residues D2327–L2500 enclose the VWFA 4 domain. A nonhelical region (NC3) region spans residues S2455–V2750. One can recognise a Laminin G-like domain in the interval G2524 to P2716. Residues N2532 and N2683 are each glycosylated (N-linked (GlcNAc...) asparagine). Disordered stretches follow at residues S2749–G2900 and P2935–P3080. Collagen-like domains follow at residues G2751–G2802, G2807–G2858, and P2859–G2900. Residues G2751–I2902 form a triple-helical region (COL2) with 1 imperfection region. Pro residues-rich tracts occupy residues P2752 to G2761 and P2788 to Q2798. Positions P2821–P2830 are enriched in low complexity. A compositionally biased stretch (pro residues) spans L2832–P2841. Low complexity-rich tracts occupy residues P2842–T2854 and A2865–P2878. The short motif at R2899–D2901 is the Cell attachment site element. The nonhelical region (NC2) stretch occupies residues A2903–P2945. Residues P2935–Q2944 show a composition bias toward polar residues. The span at P2945 to P2954 shows a compositional bias: pro residues. The Collagen-like 4 domain maps to P2945–G2994. The triple-helical region (COL1) with 2 imperfections stretch occupies residues G2946 to C3048. The span at G2961–G2970 shows a compositional bias: gly residues. The span at Q3010 to R3024 shows a compositional bias: low complexity. A nonhelical region (NC1) region spans residues D3049–P3124.

This sequence belongs to the fibril-associated collagens with interrupted helices (FACIT) family. In terms of assembly, trimer of identical chains each containing 190 kDa of non-triple-helical sequences. In terms of processing, the triple-helical tail is stabilized by disulfide bonds at each end. Prolines at the third position of the tripeptide repeating unit (G-X-Y) are hydroxylated in some or all of the chains. Post-translationally, O-glycosylated; glycosaminoglycan of chondroitin-sulfate type. In terms of tissue distribution, type XII collagen is present in tendons, ligaments, perichondrium, and periosteum, all dense connective tissues containing type I collagen.

It localises to the secreted. The protein resides in the extracellular space. The protein localises to the extracellular matrix. In terms of biological role, type XII collagen interacts with type I collagen-containing fibrils, the COL1 domain could be associated with the surface of the fibrils, and the COL2 and NC3 domains may be localized in the perifibrillar matrix. This is Collagen alpha-1(XII) chain (COL12A1) from Gallus gallus (Chicken).